A 63-amino-acid chain; its full sequence is Small ribosomal subunit protein bS21 (63 aa).

It belongs to the bacterial ribosomal protein bS21 family.

The sequence is that of Small ribosomal subunit protein bS21 from Parabacteroides distasonis (strain ATCC 8503 / DSM 20701 / CIP 104284 / JCM 5825 / NCTC 11152).